The chain runs to 389 residues: Chalcone synthase (389 aa).

The active site involves C164.

It belongs to the thiolase-like superfamily. Chalcone/stilbene synthases family.

It catalyses the reaction (E)-4-coumaroyl-CoA + 3 malonyl-CoA + 3 H(+) = 2',4,4',6'-tetrahydroxychalcone + 3 CO2 + 4 CoA. It participates in secondary metabolite biosynthesis; flavonoid biosynthesis. Functionally, the primary product of this enzyme is 4,2',4',6'-tetrahydroxychalcone (also termed naringenin-chalcone or chalcone) which can under specific conditions spontaneously isomerize into naringenin. The sequence is that of Chalcone synthase (CHS) from Catharanthus roseus (Madagascar periwinkle).